The primary structure comprises 107 residues: Toluene 1,2-dioxygenase system ferredoxin subunit (107 aa).

Residues threonine 4–valine 99 form the Rieske domain. Cysteine 43, histidine 45, cysteine 62, and histidine 65 together coordinate [2Fe-2S] cluster.

The protein belongs to the bacterial ring-hydroxylating dioxygenase ferredoxin component family. In terms of assembly, this dioxygenase system consists of four proteins: the two subunits of the hydroxylase component (todC1 and todC2), a ferredoxin (TodB) and a ferredoxin reductase (TodA).

Its pathway is xenobiotic degradation; toluene degradation. Functionally, this protein seems to be a 2Fe-2S ferredoxin. The chain is Toluene 1,2-dioxygenase system ferredoxin subunit (todB) from Pseudomonas putida (strain ATCC 700007 / DSM 6899 / JCM 31910 / BCRC 17059 / LMG 24140 / F1).